A 188-amino-acid chain; its full sequence is Ribosome-recycling factor (188 aa).

This sequence belongs to the RRF family.

Its subcellular location is the cytoplasm. Responsible for the release of ribosomes from messenger RNA at the termination of protein biosynthesis. May increase the efficiency of translation by recycling ribosomes from one round of translation to another. This chain is Ribosome-recycling factor, found in Cereibacter sphaeroides (strain ATCC 17023 / DSM 158 / JCM 6121 / CCUG 31486 / LMG 2827 / NBRC 12203 / NCIMB 8253 / ATH 2.4.1.) (Rhodobacter sphaeroides).